A 628-amino-acid chain; its full sequence is Chaperone protein DnaK (628 aa).

A Phosphothreonine; by autocatalysis modification is found at T197. A compositionally biased stretch (basic and acidic residues) spans 595 to 604 (AEAMYKKEQG). Positions 595 to 628 (AEAMYKKEQGEQAGAQPNQKAKKDDDDVIDAEVE) are disordered.

The protein belongs to the heat shock protein 70 family.

Acts as a chaperone. This is Chaperone protein DnaK from Aliarcobacter butzleri (strain RM4018) (Arcobacter butzleri).